A 1827-amino-acid polypeptide reads, in one-letter code: Laminin subunit beta-4 (1827 aa).

The first 21 residues, 1-21 (MLLRLELSALLLLLIAAPVRL), serve as a signal peptide directing secretion. Residues 26 to 266 (VGNSCYPNLG…ALYEMVVRGS (241 aa)) enclose the Laminin N-terminal domain. Asn231 carries N-linked (GlcNAc...) asparagine glycosylation. Cystine bridges form between Cys267-Cys276, Cys269-Cys297, Cys299-Cys308, Cys311-Cys331, Cys334-Cys343, Cys336-Cys361, Cys364-Cys373, Cys376-Cys394, Cys397-Cys410, Cys399-Cys417, Cys419-Cys428, Cys431-Cys446, Cys449-Cys463, Cys451-Cys470, Cys472-Cys481, Cys484-Cys498, Cys501-Cys513, Cys503-Cys520, and Cys522-Cys531. 4 Laminin EGF-like domains span residues 267–333 (CFCN…VCKR), 334–396 (CNCH…ACIP), 397–448 (CDCD…GCQL), and 449–500 (CRCN…GCIP). In terms of domain architecture, Laminin EGF-like 5; truncated spans 501 to 544 (CDCDIGGALKTECSSVDGQCKCRPNMVGQKCNDPAPGYFLAPLD). The region spanning 540–847 (LAPLDFYIYE…LIGSMSAFIH (308 aa)) is the Laminin IV type B domain. Cystine bridges form between Cys853-Cys865, Cys855-Cys872, Cys874-Cys883, Cys886-Cys898, Cys901-Cys913, Cys903-Cys920, Cys922-Cys931, Cys934-Cys944, Cys947-Cys956, Cys949-Cys963, Cys966-Cys975, Cys978-Cys992, Cys995-Cys1011, Cys997-Cys1022, Cys1024-Cys1033, Cys1036-Cys1051, Cys1054-Cys1068, Cys1056-Cys1075, Cys1078-Cys1087, Cys1090-Cys1103, Cys1106-Cys1126, Cys1108-Cys1133, Cys1135-Cys1144, Cys1147-Cys1160, Cys1163-Cys1175, Cys1165-Cys1182, Cys1184-Cys1193, Cys1196-Cys1208, Cys1211-Cys1223, Cys1213-Cys1230, Cys1232-Cys1241, and Cys1244-Cys1255. 8 Laminin EGF-like domains span residues 853–900 (CNCH…GCSP), 901–946 (CDCD…LCRR), 947–994 (CQCN…PCEP), 995–1053 (CLCP…RCKE), 1054–1105 (CCCN…DCKE), 1106–1162 (CSCD…GCQP), 1163–1210 (CNCN…QCMF), and 1211–1257 (CDCN…ACEP). Asn1001 carries an N-linked (GlcNAc...) asparagine glycan. The domain II stretch occupies residues 1258 to 1449 (CHACNHLWEK…LSAANINEEV (192 aa)). 2 coiled-coil regions span residues 1294-1335 (ELQH…EIID) and 1385-1449 (NKIK…NEEV). An N-linked (GlcNAc...) asparagine glycan is attached at Asn1329. The segment at 1450 to 1476 (CGAPGDAECEKAKCGGALCGKCGGPDC) is domain alpha. Residues 1477 to 1827 (TGSLPISLNA…KVQRYNLCSP (351 aa)) form a domain I region. Asn1485, Asn1496, Asn1513, Asn1533, Asn1599, Asn1629, Asn1644, Asn1672, Asn1686, Asn1702, Asn1726, Asn1745, Asn1750, and Asn1761 each carry an N-linked (GlcNAc...) asparagine glycan. Coiled-coil stretches lie at residues 1485-1554 (NASK…EKVK) and 1584-1820 (DEIK…DKVQ).

Laminin is a complex glycoprotein, consisting of three different polypeptide chains (alpha, beta, gamma), which are bound to each other by disulfide bonds into a cross-shaped molecule comprising one long and three short arms with globules at each end.

The protein localises to the secreted. The protein resides in the extracellular space. Its subcellular location is the extracellular matrix. It is found in the basement membrane. In terms of biological role, binding to cells via a high affinity receptor, laminin is thought to mediate the attachment, migration and organization of cells into tissues during embryonic development by interacting with other extracellular matrix components. Positively regulates apical-basal distribution of Muller glia cells in the retina. This Danio rerio (Zebrafish) protein is Laminin subunit beta-4 (lamb4).